The following is a 133-amino-acid chain: Vesicle transport protein GOT1A (133 aa).

The Cytoplasmic portion of the chain corresponds to 1-9; sequence MISITEWQK. The chain crosses the membrane as a helical span at residues 10–30; it reads IGVGITGFGVFFILFGILLYF. Position 31 (Asp31) is a topological domain, lumenal. Residues 32 to 52 traverse the membrane as a helical segment; sequence SVLLAFGNLLFLTGLSLIIGL. The Cytoplasmic portion of the chain corresponds to 53-68; that stretch reads RRTFAFFFQRHKLKGT. Residues 69–89 form a helical membrane-spanning segment; that stretch reads SFFLGGVAIVLLRWPLLGMLL. Topologically, residues 90–92 are lumenal; sequence EAY. A helical membrane pass occupies residues 93–113; that stretch reads GFISLFKGFFPVVFGFLGSAF. At 114 to 133 the chain is on the cytoplasmic side; sequence NIPFLSTLFQKLQGSSSSMV.

Belongs to the GOT1 family.

The protein resides in the golgi apparatus membrane. Functionally, may be involved in fusion of ER-derived transport vesicles with the Golgi complex. In Mus musculus (Mouse), this protein is Vesicle transport protein GOT1A.